Here is a 654-residue protein sequence, read N- to C-terminus: DNA ligase (654 aa).

Residues 37–41 (DEEYD), 86–87 (SM), and Glu-113 each bind NAD(+). The active-site N6-AMP-lysine intermediate is Lys-115. Residues Arg-136, Glu-170, and Lys-308 each contribute to the NAD(+) site. Residues Cys-402, Cys-405, Cys-418, and Cys-423 each contribute to the Zn(2+) site. In terms of domain architecture, BRCT spans 576–654 (ITQNAFSGKS…GEFERLKLEI (79 aa)).

Belongs to the NAD-dependent DNA ligase family. LigA subfamily. Mg(2+) is required as a cofactor. It depends on Mn(2+) as a cofactor.

It carries out the reaction NAD(+) + (deoxyribonucleotide)n-3'-hydroxyl + 5'-phospho-(deoxyribonucleotide)m = (deoxyribonucleotide)n+m + AMP + beta-nicotinamide D-nucleotide.. Its function is as follows. DNA ligase that catalyzes the formation of phosphodiester linkages between 5'-phosphoryl and 3'-hydroxyl groups in double-stranded DNA using NAD as a coenzyme and as the energy source for the reaction. It is essential for DNA replication and repair of damaged DNA. In Campylobacter curvus (strain 525.92), this protein is DNA ligase.